We begin with the raw amino-acid sequence, 406 residues long: Phosphopentomutase (406 aa).

6 residues coordinate Mn(2+): D10, D305, H310, D346, H347, and H358.

The protein belongs to the phosphopentomutase family. It depends on Mn(2+) as a cofactor.

Its subcellular location is the cytoplasm. It carries out the reaction 2-deoxy-alpha-D-ribose 1-phosphate = 2-deoxy-D-ribose 5-phosphate. It catalyses the reaction alpha-D-ribose 1-phosphate = D-ribose 5-phosphate. The protein operates within carbohydrate degradation; 2-deoxy-D-ribose 1-phosphate degradation; D-glyceraldehyde 3-phosphate and acetaldehyde from 2-deoxy-alpha-D-ribose 1-phosphate: step 1/2. Functionally, isomerase that catalyzes the conversion of deoxy-ribose 1-phosphate (dRib-1-P) and ribose 1-phosphate (Rib-1-P) to deoxy-ribose 5-phosphate (dRib-5-P) and ribose 5-phosphate (Rib-5-P), respectively. The polypeptide is Phosphopentomutase (Vibrio cholerae serotype O1 (strain ATCC 39541 / Classical Ogawa 395 / O395)).